Here is a 446-residue protein sequence, read N- to C-terminus: Probable D-serine dehydratase (446 aa).

Lys116 carries the post-translational modification N6-(pyridoxal phosphate)lysine.

This sequence belongs to the serine/threonine dehydratase family. DsdA subfamily. Pyridoxal 5'-phosphate serves as cofactor.

The enzyme catalyses D-serine = pyruvate + NH4(+). The sequence is that of Probable D-serine dehydratase from Bacillus thuringiensis subsp. konkukian (strain 97-27).